The following is a 342-amino-acid chain: Probable long-chain-alcohol O-fatty-acyltransferase 3 (342 aa).

Helical transmembrane passes span 9–29 (IKLW…STGI), 36–56 (LLSV…FSYV), 58–78 (FSGC…ILFS), 115–135 (IPIW…QMYE), 153–173 (IFLE…ITLG), 227–247 (MFLG…MLFF), 255–275 (TGEV…EVAV), and 297–317 (VGFV…SGII).

This sequence belongs to the wax synthase family.

The protein localises to the membrane. It carries out the reaction a long chain fatty alcohol + a fatty acyl-CoA = a wax ester + CoA. In terms of biological role, catalyzes the final step in the synthesis of long-chain linear esters (waxes). In Arabidopsis thaliana (Mouse-ear cress), this protein is Probable long-chain-alcohol O-fatty-acyltransferase 3 (AT3).